A 93-amino-acid polypeptide reads, in one-letter code: Large ribosomal subunit protein uL23cz/uL23cy (93 aa).

It belongs to the universal ribosomal protein uL23 family. In terms of assembly, part of the 50S ribosomal subunit.

Its subcellular location is the plastid. It is found in the chloroplast. In terms of biological role, binds to 23S rRNA. The polypeptide is Large ribosomal subunit protein uL23cz/uL23cy (rpl23-A) (Citrus sinensis (Sweet orange)).